A 275-amino-acid polypeptide reads, in one-letter code: MKEKFFELKVLSRKSDVLKEFAFELGATCIEEIENGFILRDEDDLSNISWGLEEFAGRIGSDISTSLEIKDNIDWINEYKKGIKPVSSGKFYIRPSWEEQKDGFIDIIIDPALAFGSGHHESTSSCLNLISKYINLKECKIALDVGCGSGILSIALAKLGLAVDACDTDEQAVLSSTDNARKNGIKFNNIWTGSITDANGRYDVVVANIISDVILLLSKDLKMHVNNNGYLILSGILTKYKDRILQAFGDLELVWNITQNEWESFIFKNKDKNGK.

S-adenosyl-L-methionine-binding residues include Thr123, Gly146, Asp167, and Asn208.

It belongs to the methyltransferase superfamily. PrmA family.

The protein resides in the cytoplasm. It carries out the reaction L-lysyl-[protein] + 3 S-adenosyl-L-methionine = N(6),N(6),N(6)-trimethyl-L-lysyl-[protein] + 3 S-adenosyl-L-homocysteine + 3 H(+). Functionally, methylates ribosomal protein L11. The sequence is that of Ribosomal protein L11 methyltransferase from Campylobacter fetus subsp. fetus (strain 82-40).